A 1297-amino-acid chain; its full sequence is DNA-directed RNA polymerase subunit beta' (1297 aa).

4 residues coordinate Zn(2+): Cys-60, Cys-62, Cys-75, and Cys-78. Mg(2+)-binding residues include Asp-535, Asp-537, and Asp-539. Residues Cys-883, Cys-961, Cys-968, and Cys-971 each coordinate Zn(2+).

This sequence belongs to the RNA polymerase beta' chain family. The RNAP catalytic core consists of 2 alpha, 1 beta, 1 beta' and 1 omega subunit. When a sigma factor is associated with the core the holoenzyme is formed, which can initiate transcription. Mg(2+) is required as a cofactor. Zn(2+) serves as cofactor.

It carries out the reaction RNA(n) + a ribonucleoside 5'-triphosphate = RNA(n+1) + diphosphate. DNA-dependent RNA polymerase catalyzes the transcription of DNA into RNA using the four ribonucleoside triphosphates as substrates. The chain is DNA-directed RNA polymerase subunit beta' from Salinispora arenicola (strain CNS-205).